Reading from the N-terminus, the 189-residue chain is MTKLENPVLMATIGGAQGLRGEVRAKAYTADPGALGDYGHLHSMDGRSFEVLEIREMKNVVVVRFRGVNDRNAAEALNGLELYIERDNLPDEELDEDEFYYADLEGLEARDDKGVSYGTVTGVFDFGAGDLLELKGPGKRPVLIPFSEASVLEIDLEAGTLLIDPLAAGLVDDPEELSKFTPDKPKKKK.

One can recognise a PRC barrel domain in the interval glutamate 96–glycine 169.

This sequence belongs to the RimM family. As to quaternary structure, binds ribosomal protein uS19.

It localises to the cytoplasm. Its function is as follows. An accessory protein needed during the final step in the assembly of 30S ribosomal subunit, possibly for assembly of the head region. Essential for efficient processing of 16S rRNA. May be needed both before and after RbfA during the maturation of 16S rRNA. It has affinity for free ribosomal 30S subunits but not for 70S ribosomes. This is Ribosome maturation factor RimM from Rhizobium johnstonii (strain DSM 114642 / LMG 32736 / 3841) (Rhizobium leguminosarum bv. viciae).